The chain runs to 425 residues: Alpha/beta hydrolase xenA (425 aa).

Aspartate 366 is an active-site residue.

This sequence belongs to the AB hydrolase superfamily. FUS2 hydrolase family. As to quaternary structure, homodimer.

Its pathway is mycotoxin biosynthesis. Its function is as follows. Alpha/beta hydrolase; part of the gene cluster that mediates the biosynthesis of xenoacremones such as xenoacremone A, a compound that shows inhibitory activity toward the PI3K/AKT signaling pathway and which has the ability to induce apoptosis of A549 lung cancer cells. Within the pathway, cooperation of the hybrid PKS-NRPS xenE and the trans-acting enoyl reductase xenG is responsible for the formation of the reduced tyrosine-nonaketide derivative. The alpha/beta hydrolase xenA then accelerates intramolecular nucleophilic attack to give a pyrrolidone derivative. Subsequently, three enzymes, xenF, xenD, and xenC, coordinately participate in the conversion to xenoacremone B. XenF catalyzes sigmatropic rearrangement to form an A-ring, which leads to an unusual intermediate with a hexane ring, which is required for the formation of the tricarbocyclic product. Epoxidation catalyzed by xenD and the formation of the paracyclophane ether catalyzed by xenC initiate a spontaneous intramolecular Diels-Alder (IMDA) reaction to yield xenoacremone B. Spontaneous hydration of xenoacremone B leads to the formation of xenoacremone A, which undergoes subsequent methylation to afford xenoacremone C. This chain is Alpha/beta hydrolase xenA, found in Xenoacremonium sinensis (Endophyte fungus).